Here is a 91-residue protein sequence, read N- to C-terminus: uncharacterized protein (91 aa).

It localises to the plastid. It is found in the chloroplast. This is an uncharacterized protein from Phalaenopsis aphrodite subsp. formosana (Moth orchid).